The sequence spans 46 residues: Viscotoxin-1-PS (46 aa).

Cystine bridges form between cysteine 3/cysteine 40, cysteine 4/cysteine 32, and cysteine 16/cysteine 26.

Belongs to the plant thionin (TC 1.C.44) family.

It is found in the secreted. In terms of biological role, thionins are small plant proteins which are toxic to animal cells. They seem to exert their toxic effect at the level of the cell membrane. Their precise function is not known. This Viscum album (European mistletoe) protein is Viscotoxin-1-PS (THI2.4).